We begin with the raw amino-acid sequence, 213 residues long: Small ribosomal subunit protein eS6 (213 aa).

This sequence belongs to the eukaryotic ribosomal protein eS6 family.

This is Small ribosomal subunit protein eS6 from Sulfolobus acidocaldarius (strain ATCC 33909 / DSM 639 / JCM 8929 / NBRC 15157 / NCIMB 11770).